Here is a 562-residue protein sequence, read N- to C-terminus: Wee1-like protein kinase 2 (562 aa).

2 disordered regions span residues 1-86 (MRTA…DKGV) and 161-181 (YRQA…DDCS). The segment covering 35–48 (HSNQRGSPVNSWRA) has biased composition (polar residues). The Protein kinase domain maps to 217-491 (FLEIEKIGAG…AKNSLLRRCV (275 aa)). ATP is bound by residues 223–231 (IGAGEFGSV) and lysine 246. The active-site Proton acceptor is aspartate 344. Mg(2+) is bound by residues asparagine 349 and aspartate 381. A coiled-coil region spans residues 494-520 (AAQLQKQLNVEKFKTAMLERELKAAKL).

Belongs to the protein kinase superfamily. Ser/Thr protein kinase family. WEE1 subfamily.

Its subcellular location is the nucleus. The enzyme catalyses L-tyrosyl-[protein] + ATP = O-phospho-L-tyrosyl-[protein] + ADP + H(+). Its function is as follows. Oocyte-specific protein tyrosine kinase that phosphorylates and inhibits cdk1 and acts as a regulator of meiosis. Required to maintain meiotic arrest in oocytes by phosphorylating cdk1 at 'Tyr-15', leading to inhibit cdk1 activity and prevent meiotic reentry. The chain is Wee1-like protein kinase 2 (wee2) from Xenopus tropicalis (Western clawed frog).